A 424-amino-acid polypeptide reads, in one-letter code: Serine--tRNA ligase (424 aa).

Residues 109–129 (QEDVPYGESEEDNREERKWGD) are disordered. 231 to 233 (TAE) contacts L-serine. 262 to 264 (RSE) is a binding site for ATP. Residue Glu-285 participates in L-serine binding. 349–352 (EISS) provides a ligand contact to ATP. Residue Ser-385 participates in L-serine binding.

It belongs to the class-II aminoacyl-tRNA synthetase family. Type-1 seryl-tRNA synthetase subfamily. In terms of assembly, homodimer. The tRNA molecule binds across the dimer.

It is found in the cytoplasm. It carries out the reaction tRNA(Ser) + L-serine + ATP = L-seryl-tRNA(Ser) + AMP + diphosphate + H(+). The catalysed reaction is tRNA(Sec) + L-serine + ATP = L-seryl-tRNA(Sec) + AMP + diphosphate + H(+). Its pathway is aminoacyl-tRNA biosynthesis; selenocysteinyl-tRNA(Sec) biosynthesis; L-seryl-tRNA(Sec) from L-serine and tRNA(Sec): step 1/1. Catalyzes the attachment of serine to tRNA(Ser). Is also able to aminoacylate tRNA(Sec) with serine, to form the misacylated tRNA L-seryl-tRNA(Sec), which will be further converted into selenocysteinyl-tRNA(Sec). In Shouchella clausii (strain KSM-K16) (Alkalihalobacillus clausii), this protein is Serine--tRNA ligase.